Here is a 376-residue protein sequence, read N- to C-terminus: Transcription initiation factor IIA subunit 1 (376 aa).

The residue at position 2 (alanine 2) is an N-acetylalanine. 2 stretches are compositionally biased toward low complexity: residues 69-79 (QVQQQHQPQQQ) and 89-105 (QAQP…TQQV). Disordered regions lie at residues 69 to 107 (QVQQ…QVLI), 247 to 266 (QAQI…AQTQ), and 274 to 329 (DGTG…QELF). Phosphoserine; by TAF1 is present on residues serine 280, serine 281, serine 316, and serine 321. The segment covering 280–329 (SSEEDEDEEEDYDDDEEEDKEKDGAEDGQVEEEPLNSEDDVSDEEGQELF) has biased composition (acidic residues). Residues histidine 343 and arginine 344 each coordinate DNA.

This sequence belongs to the TFIIA subunit 1 family. As to quaternary structure, TFIIA is a heterodimer of the large unprocessed subunit 1 and a small subunit gamma. It was originally believed to be a heterotrimer of an alpha (p35), a beta (p19) and a gamma subunit (p12). TFIIA forms a complex with TBP. Part of TBP-based Pol II pre-initiation complex (PIC), in which Pol II core assembles with general transcription factors and other specific initiation factors including GTF2E1, GTF2E2, GTF2F1, GTF2F2, TCEA1, ERCC2, ERCC3, GTF2H2, GTF2H3, GTF2H4, GTF2H5, GTF2A1, GTF2A2, GTF2B and TBP; this large multi-subunit PIC complex mediates DNA unwinding and targets Pol II core to the transcription start site where the first phosphodiester bond forms. The alpha and beta subunits are postranslationally produced from the precursor form by TASP1. The cleavage promotes proteasomal degradation.

It localises to the nucleus. Functionally, TFIIA is a component of the transcription machinery of RNA polymerase II and plays an important role in transcriptional activation. TFIIA in a complex with TBP mediates transcriptional activity. In Homo sapiens (Human), this protein is Transcription initiation factor IIA subunit 1 (GTF2A1).